Consider the following 363-residue polypeptide: L-serine dehydratase/L-threonine deaminase (363 aa).

Ala2 is subject to N-acetylalanine. Lys41 is subject to N6-(pyridoxal phosphate)lysine. The disordered stretch occupies residues 74–98 (RGRSHSGDEQPHVRSQALLPDTPSP). Pro164 is a binding site for pyridoxal 5'-phosphate.

It belongs to the serine/threonine dehydratase family. As to quaternary structure, homodimer. The cofactor is pyridoxal 5'-phosphate. As to expression, predominantly expressed in the periportal regions of the liver.

The protein localises to the cytoplasm. It catalyses the reaction L-serine = pyruvate + NH4(+). The catalysed reaction is L-threonine = 2-oxobutanoate + NH4(+). It participates in carbohydrate biosynthesis; gluconeogenesis. Its function is as follows. Catalyzes the pyridoxal-phosphate-dependent dehydrative deamination of L-threonine and L-serine to ammonia and alpha-ketobutyrate and pyruvate, respectively. In Rattus norvegicus (Rat), this protein is L-serine dehydratase/L-threonine deaminase (Sds).